The primary structure comprises 287 residues: Protoheme IX farnesyltransferase (287 aa).

Helical transmembrane passes span 19 to 39, 100 to 120, 134 to 154, 162 to 182, 212 to 232, 233 to 253, and 267 to 287; these read LMVAGATFFGAMLAVPHVTIT, MVLCLAGGLTSLLVGIGIVAV, FALLVGAAAGAMPPVVGWLAV, MLVVVYTLYLLWQIPHFWLHA, VWFHAYAVAVLMVPAFPLLEW, VGMRIMVTLCGIALLFAAMLA, and VLCAVMVVLLIDRLAIPVSLF.

Belongs to the UbiA prenyltransferase family. Protoheme IX farnesyltransferase subfamily.

It is found in the cell inner membrane. It catalyses the reaction heme b + (2E,6E)-farnesyl diphosphate + H2O = Fe(II)-heme o + diphosphate. The protein operates within porphyrin-containing compound metabolism; heme O biosynthesis; heme O from protoheme: step 1/1. Converts heme B (protoheme IX) to heme O by substitution of the vinyl group on carbon 2 of heme B porphyrin ring with a hydroxyethyl farnesyl side group. In Nitratidesulfovibrio vulgaris (strain ATCC 29579 / DSM 644 / CCUG 34227 / NCIMB 8303 / VKM B-1760 / Hildenborough) (Desulfovibrio vulgaris), this protein is Protoheme IX farnesyltransferase.